A 635-amino-acid polypeptide reads, in one-letter code: Early transcription factor 70 kDa subunit (635 aa).

Positions 32-185 (RSIIDENKSV…SNIISLMSDE (154 aa)) constitute a Helicase ATP-binding domain. Residue 45-52 (HIMGSGKT) coordinates ATP. The short motif at 135–138 (DEAH) is the DEXH box element. A Helicase C-terminal domain is found at 326–505 (KFKYFIGKIT…TLPFDIKKLL (180 aa)).

This sequence belongs to the helicase family. VETF subfamily. In terms of assembly, heterodimer of a 70 kDa and a 82 kDa subunit.

Its subcellular location is the virion. Its function is as follows. Acts with RNA polymerase to initiate transcription from early gene promoters. A DNA-dependent ATPase activity is associated with VETF. This is Early transcription factor 70 kDa subunit (VETFS) from Erythrocebus patas (Red guenon).